A 249-amino-acid chain; its full sequence is Type III pantothenate kinase (249 aa).

Residue 6–13 (DCGNSFIK) participates in ATP binding. Residues tyrosine 93 and 100-103 (GMDR) each bind substrate. The active-site Proton acceptor is the aspartate 102. Aspartate 122 provides a ligand contact to K(+). ATP is bound at residue threonine 125. Threonine 181 serves as a coordination point for substrate.

The protein belongs to the type III pantothenate kinase family. In terms of assembly, homodimer. The cofactor is NH4(+). K(+) is required as a cofactor.

It is found in the cytoplasm. The enzyme catalyses (R)-pantothenate + ATP = (R)-4'-phosphopantothenate + ADP + H(+). The protein operates within cofactor biosynthesis; coenzyme A biosynthesis; CoA from (R)-pantothenate: step 1/5. Catalyzes the phosphorylation of pantothenate (Pan), the first step in CoA biosynthesis. This Pseudomonas putida (strain W619) protein is Type III pantothenate kinase.